We begin with the raw amino-acid sequence, 381 residues long: E3 ubiquitin-protein ligase KCMF1 (381 aa).

Residue S2 is modified to N-acetylserine. The residue at position 2 (S2) is a Phosphoserine. A ZZ-type zinc finger spans residues 4 to 60 (HEGVSCDACLKGNFRGRRYKCLICYDYDLCASCYESGATTTRHTTDHPMQCILTRVD). Residues C9, C12, C24, C27, C33, C36, H46, and H50 each coordinate Zn(2+). Residues 78–101 (FTCPYCGKMGYTETSLQEHVTSEH) form a C2H2-type zinc finger. The disordered stretch occupies residues 154-193 (MFHPGRGLGGPRARRSNMHFTSSSTGGLSSSQSSYSPSNR). A phosphoserine mark is found at S169, S189, and S212. The segment covering 175–191 (SSSTGGLSSSQSSYSPS) has biased composition (low complexity). Positions 225–257 (SQLQQLQMQLQLERQHAQAARQQLETARNATRR) form a coiled coil. Residues 294–314 (TRLNDPKMSETERQSMESERA) form a disordered region. The span at 297–314 (NDPKMSETERQSMESERA) shows a compositional bias: basic and acidic residues. A phosphoserine mark is found at S335 and S336.

Belongs to the KCMF1 family. As to quaternary structure, component of the SIFI complex, composed of KCMF1, UBR4 and calmodulin (CALM1, CALM2 or CALM3). In terms of tissue distribution, spleen, small intestine, ovary, peripheral blood, lung, kidney and pancreas. Expressed at low levels in the thymus, prostate, testis, colon, heart, brain, placenta and liver.

It localises to the cytoplasm. It is found in the late endosome. The protein localises to the lysosome. It carries out the reaction S-ubiquitinyl-[E2 ubiquitin-conjugating enzyme]-L-cysteine + [acceptor protein]-L-lysine = [E2 ubiquitin-conjugating enzyme]-L-cysteine + N(6)-ubiquitinyl-[acceptor protein]-L-lysine.. The protein operates within protein modification; protein ubiquitination. In terms of biological role, E3 ubiquitin-protein ligase which accepts ubiquitin from an E2 ubiquitin-conjugating enzyme and then transfers it to targeted substrates, promoting their degradation by the proteasome. Together with UBR4, component of the N-end rule pathway: ubiquitinates proteins bearing specific N-terminal residues that are destabilizing according to the N-end rule, leading to their degradation. Does not ubiquitinate proteins that are acetylated at the N-terminus. Together with UBR4, part of a protein quality control pathway that catalyzes ubiquitination and degradation of proteins that have been oxidized in response to reactive oxygen species (ROS): recognizes proteins with an Arg-CysO3(H) degron at the N-terminus, and mediates assembly of heterotypic 'Lys-63'-/'Lys-27'-linked branched ubiquitin chains on oxidized proteins, leading to their degradation by autophagy. Catalytic component of the SIFI complex, a multiprotein complex required to inhibit the mitochondrial stress response after a specific stress event has been resolved: ubiquitinates and degrades (1) components of the HRI-mediated signaling of the integrated stress response, such as DELE1 and EIF2AK1/HRI, as well as (2) unimported mitochondrial precursors. Within the SIFI complex, UBR4 initiates ubiquitin chain that are further elongated or branched by KCMF1. This Homo sapiens (Human) protein is E3 ubiquitin-protein ligase KCMF1.